Consider the following 501-residue polypeptide: Probable cytosol aminopeptidase (501 aa).

Residues Lys272 and Asp277 each coordinate Mn(2+). Residue Lys284 is part of the active site. Asp295, Asp354, and Glu356 together coordinate Mn(2+). Arg358 is an active-site residue.

Belongs to the peptidase M17 family. Requires Mn(2+) as cofactor.

It localises to the cytoplasm. The enzyme catalyses Release of an N-terminal amino acid, Xaa-|-Yaa-, in which Xaa is preferably Leu, but may be other amino acids including Pro although not Arg or Lys, and Yaa may be Pro. Amino acid amides and methyl esters are also readily hydrolyzed, but rates on arylamides are exceedingly low.. It carries out the reaction Release of an N-terminal amino acid, preferentially leucine, but not glutamic or aspartic acids.. Presumably involved in the processing and regular turnover of intracellular proteins. Catalyzes the removal of unsubstituted N-terminal amino acids from various peptides. In Buchnera aphidicola subsp. Baizongia pistaciae (strain Bp), this protein is Probable cytosol aminopeptidase.